The chain runs to 155 residues: Ribonuclease H (155 aa).

An RNase H type-1 domain is found at 1–142; it reads MLKQVEIFTD…CDELARAAAM (142 aa). Residues Asp10, Glu48, Asp70, and Asp134 each coordinate Mg(2+).

The protein belongs to the RNase H family. As to quaternary structure, monomer. Mg(2+) serves as cofactor.

It is found in the cytoplasm. The catalysed reaction is Endonucleolytic cleavage to 5'-phosphomonoester.. In terms of biological role, endonuclease that specifically degrades the RNA of RNA-DNA hybrids. The polypeptide is Ribonuclease H (Escherichia coli (strain 55989 / EAEC)).